Reading from the N-terminus, the 115-residue chain is Large ribosomal subunit protein uL18 (115 aa).

The tract at residues 1–20 (MKYTKQEARKRRHYRVRSKV) is disordered. A compositionally biased stretch (basic residues) spans 8–18 (ARKRRHYRVRS).

It belongs to the universal ribosomal protein uL18 family. Part of the 50S ribosomal subunit; part of the 5S rRNA/L5/L18/L25 subcomplex. Contacts the 5S and 23S rRNAs.

Functionally, this is one of the proteins that bind and probably mediate the attachment of the 5S RNA into the large ribosomal subunit, where it forms part of the central protuberance. The sequence is that of Large ribosomal subunit protein uL18 from Mesoplasma florum (strain ATCC 33453 / NBRC 100688 / NCTC 11704 / L1) (Acholeplasma florum).